Consider the following 2363-residue polypeptide: Spectrin beta chain, non-erythrocytic 1 (2363 aa).

An N-acetylthreonine modification is found at Thr-2. The segment at 2–275 is actin-binding; sequence TTTVATDYDN…IITYVVTYYH (274 aa). Phosphoserine is present on residues Ile-14 and Ser-36. 2 Calponin-homology (CH) domains span residues 54 to 158 and 173 to 278; these read AVQK…LRFQ and KSAK…HYFS. Lys-90 carries the post-translational modification N6-acetyllysine. Residue Ser-228 is modified to Phosphoserine. Spectrin repeat units follow at residues 303–411, 423–525, 530–636, 639–742, 745–847, 850–952, 957–1060, 1063–1166, 1170–1259, 1276–1376, 1381–1482, 1486–1590, 1592–1696, 1698–1801, and 1805–1907; these read MIEK…LALR, LARR…QRLE, LQKI…RLEE, RLWK…RLEE, LLHQ…ALQD, ALYK…DALL, IQNY…SLGE, KLQQ…NLLS, AYQQ…RHRK, DLQK…AQRL, KAEL…HNLL, EIHQ…RLEE, HKAQ…KLDE, HRLF…TQIL, and YELH…RVRL. Phosphoserine is present on residues Ser-817, Ser-903, Ser-1057, Ser-1076, Ser-1079, and Ser-1237. 3 positions are modified to phosphoserine: Ser-1388, Ser-1447, and Ser-1557. The interval 1563-2093 is interaction with ANK2; the sequence is IRQRLADLKQ…LLEVRRQQEE (531 aa). Tyr-1805 carries the phosphotyrosine modification. An N6-acetyllysine mark is found at Lys-1815, Lys-1913, and Lys-1989. 2 Spectrin repeats span residues 1914–2014 and 2018–2097; these read FRFF…EWLR and EVHQ…EERK. A disordered region spans residues 2089-2193; that stretch reads RQQEEEERKR…AATLPARTLE (105 aa). Phosphoserine occurs at positions 2102, 2127, and 2137. A compositionally biased stretch (polar residues) spans 2115-2130; the sequence is SQQWDTSKGDQVSQNG. Thr-2146 carries the phosphothreonine modification. Residue Ser-2147 is modified to Phosphoserine. The segment at 2148 to 2176 is mediates interaction with CAMSAP1; it reads EMVNGAAEQRTSSKESSPVPSPTLDRKAK. Thr-2158 is modified (phosphothreonine). Residues Ser-2159, Ser-2160, Ser-2163, Ser-2164, and Ser-2168 each carry the phosphoserine modification. Phosphothreonine is present on Thr-2170. Ser-2183 carries the post-translational modification Phosphoserine. Residues Thr-2186 and Thr-2194 each carry the phosphothreonine modification. The PH domain maps to 2196–2306; the sequence is AAQMEGFLNR…WIQAISSAIS (111 aa). Positions 2308 to 2363 are disordered; that stretch reads DKHDTSASTQSTPASSRAQTLPTSVVTITSESSPGKREKDKEKDKEKRFSLFGKKK. Ser-2313 and Ser-2318 each carry phosphoserine. The segment covering 2313 to 2327 has biased composition (low complexity); sequence SASTQSTPASSRAQT. Thr-2319 bears the Phosphothreonine mark. A glycan (O-linked (GlcNAc) serine) is linked at Ser-2323. Thr-2327 carries the phosphothreonine modification. A compositionally biased stretch (polar residues) spans 2328-2340; the sequence is LPTSVVTITSESS. Phosphoserine occurs at positions 2339 and 2340. The segment covering 2341–2356 has biased composition (basic and acidic residues); the sequence is PGKREKDKEKDKEKRF.

Belongs to the spectrin family. In terms of assembly, interacts with ANK2. Interacts with CPNE4 (via VWFA domain). Like erythrocyte spectrin, the spectrin-like proteins are capable to form dimers which can further associate to tetramers. Interacts with CAMSAP1. Can form heterodimers with SPTAN1. As to expression, isoform 2 is present in brain, heart, kidney and liver (at protein level).

It localises to the cytoplasm. It is found in the cytoskeleton. The protein localises to the endomembrane system. Its subcellular location is the myofibril. The protein resides in the sarcomere. It localises to the m line. It is found in the cytosol. The protein localises to the cell membrane. Its function is as follows. Fodrin, which seems to be involved in secretion, interacts with calmodulin in a calcium-dependent manner and is thus candidate for the calcium-dependent movement of the cytoskeleton at the membrane. Plays a critical role in central nervous system development and function. The protein is Spectrin beta chain, non-erythrocytic 1 (Sptbn1) of Mus musculus (Mouse).